A 417-amino-acid chain; its full sequence is 3-ketoacyl-CoA thiolase, peroxisomal (417 aa).

The transit peptide at 1–15 (MSQRLQSIKDHLVES) directs the protein to the peroxisome. The PTS2-type peroxisomal targeting signal stretch occupies residues 1–15 (MSQRLQSIKDHLVES). Residue Cys125 is the Acyl-thioester intermediate of the active site. Active-site proton acceptor residues include His375 and Cys403.

Belongs to the thiolase-like superfamily. Thiolase family. In terms of assembly, homodimer. Interacts (via PTS2-type peroxisomal targeting signal region) with PEX7; leading to its translocation into peroxisomes.

It localises to the peroxisome. The protein localises to the mitochondrion intermembrane space. The catalysed reaction is an acyl-CoA + acetyl-CoA = a 3-oxoacyl-CoA + CoA. The protein operates within lipid metabolism; fatty acid metabolism. Responsible for the thiolytic cleavage of straight chain 3-keto fatty acyl-CoAs (3-oxoacyl-CoAs). In Saccharomyces cerevisiae (strain ATCC 204508 / S288c) (Baker's yeast), this protein is 3-ketoacyl-CoA thiolase, peroxisomal (POT1).